Reading from the N-terminus, the 201-residue chain is 3-isopropylmalate dehydratase small subunit (201 aa).

This sequence belongs to the LeuD family. LeuD type 1 subfamily. In terms of assembly, heterodimer of LeuC and LeuD.

It carries out the reaction (2R,3S)-3-isopropylmalate = (2S)-2-isopropylmalate. It participates in amino-acid biosynthesis; L-leucine biosynthesis; L-leucine from 3-methyl-2-oxobutanoate: step 2/4. Its function is as follows. Catalyzes the isomerization between 2-isopropylmalate and 3-isopropylmalate, via the formation of 2-isopropylmaleate. This is 3-isopropylmalate dehydratase small subunit from Salmonella schwarzengrund (strain CVM19633).